The chain runs to 437 residues: Branched-chain amino acid transport system 2 carrier protein (437 aa).

12 consecutive transmembrane segments (helical) span residues L9 to P29, A43 to A63, A80 to R100, G117 to L137, V149 to P169, G192 to I212, M228 to L248, L280 to A300, L308 to A328, L335 to A355, V369 to A389, and L404 to V424.

Belongs to the branched chain amino acid transporter family.

It localises to the cell inner membrane. Component of the LIV-II transport system for branched-chain amino acids. BraB is specific for isoleucine, leucine and valine. The LIV-II transport system is coupled to sodium and lithium ions. This is Branched-chain amino acid transport system 2 carrier protein (braB) from Pseudomonas aeruginosa (strain ATCC 15692 / DSM 22644 / CIP 104116 / JCM 14847 / LMG 12228 / 1C / PRS 101 / PAO1).